Consider the following 1020-residue polypeptide: Protein SCAR3 (1020 aa).

Disordered regions lie at residues 167-198, 351-382, and 802-827; these read NLSQGNKKFQKDKKHCKMKKKKTSSRSRDMSR, DEKPSYGEGIGGVDFHSKDNENDKSESGLRKR, and DYLSDNHSLSNSEPWEESSDSHGRKE. A compositionally biased stretch (basic residues) spans 174–191; sequence KFQKDKKHCKMKKKKTSS. The span at 365–382 shows a compositional bias: basic and acidic residues; it reads FHSKDNENDKSESGLRKR. Polar residues predominate over residues 802–814; it reads DYLSDNHSLSNSE. A WH2 domain is found at 954 to 972; that stretch reads ETGDFLQQIRTQQFNLRPV.

This sequence belongs to the SCAR/WAVE family. As to quaternary structure, binds BRK1. Interacts with SPK1, ABI1, ABI2, ABI3 and ABI4. In terms of tissue distribution, expressed in expanding cotyledons, expanding leaves and expanding siliques containing developing embryos. Detected in unopened flower buds. Reduced expression in mature leaves and mature cotyledons.

It localises to the cytoplasm. The protein localises to the cytoskeleton. Functionally, involved in regulation of actin and microtubule organization. Part of a WAVE complex that activates the Arp2/3 complex. Regulates trichome branch positioning and expansion. This chain is Protein SCAR3 (SCAR3), found in Arabidopsis thaliana (Mouse-ear cress).